Here is a 394-residue protein sequence, read N- to C-terminus: Mannosyl-3-phosphoglycerate synthase (394 aa).

The protein belongs to the glycosyltransferase 2 family.

It is found in the cytoplasm. It catalyses the reaction (2R)-3-phosphoglycerate + GDP-alpha-D-mannose = 2-O-(alpha-D-mannosyl)-3-phosphoglycerate + GDP + H(+). It participates in carbohydrate biosynthesis; 2-(alpha-D-mannosyl)-D-glycerate biosynthesis; 2-(alpha-D-mannosyl)-D-glycerate from GDP-alpha-D-mannose (MPG route): step 1/2. In terms of biological role, transfers a mannosyl group from GDP-mannose to phosphoglycerate to form mannosyl-3-phosphoglycerate (MPG). The protein is Mannosyl-3-phosphoglycerate synthase (mngA) of Pyrococcus abyssi (strain GE5 / Orsay).